We begin with the raw amino-acid sequence, 726 residues long: Catalase-peroxidase (726 aa).

Residues 1-33 are disordered; sequence MSTSDDIHNTTATGKCPFHQGGHDQSAGAGTTT. The segment at residues 105–226 is a cross-link (tryptophyl-tyrosyl-methioninium (Trp-Tyr) (with M-252)); the sequence is WHGAGTYRSI…LGATEMGLIY (122 aa). H106 serves as the catalytic Proton acceptor. The segment at residues 226 to 252 is a cross-link (tryptophyl-tyrosyl-methioninium (Tyr-Met) (with W-105)); that stretch reads YVNPEGPDHSGEPLSAAAAIRATFGNM. Position 267 (H267) interacts with heme b.

This sequence belongs to the peroxidase family. Peroxidase/catalase subfamily. As to quaternary structure, homodimer or homotetramer. Heme b is required as a cofactor. Post-translationally, formation of the three residue Trp-Tyr-Met cross-link is important for the catalase, but not the peroxidase activity of the enzyme.

The enzyme catalyses H2O2 + AH2 = A + 2 H2O. It carries out the reaction 2 H2O2 = O2 + 2 H2O. In terms of biological role, bifunctional enzyme with both catalase and broad-spectrum peroxidase activity. The chain is Catalase-peroxidase from Shigella boydii serotype 4 (strain Sb227).